The chain runs to 883 residues: Copper-transporting ATPase PAA2, chloroplastic (883 aa).

The transit peptide at 1–65 directs the protein to the chloroplast; it reads MASNLLRFPL…TQSFESTESS (65 aa). In terms of domain architecture, HMA spans 76-146; the sequence is TPILLDVSGM…RLTESGFEAK (71 aa). Residues Cys87 and Cys90 each contribute to the Cu cation site. 6 consecutive transmembrane segments (helical) span residues 179 to 199, 209 to 229, 250 to 270, 274 to 294, 445 to 465, and 499 to 519; these read VAFA…HILH, GIWD…GALL, MNSL…ISLV, LEWD…VLLG, AIAG…FAFW, and VLVV…ILIG. Asp548 acts as the 4-aspartylphosphate intermediate in catalysis. 761–768 is a binding site for ATP; it reads GDGINDAP. Residues Asp762 and Asp766 each contribute to the Mg(2+) site. A run of 2 helical transmembrane segments spans residues 822–842 and 846–866; these read LAWA…VLLP and FAMT…FVVS.

The protein belongs to the cation transport ATPase (P-type) (TC 3.A.3) family. Type IB subfamily. In terms of tissue distribution, expressed in the shoots only and not in the roots.

Its subcellular location is the plastid. The protein localises to the chloroplast thylakoid membrane. It carries out the reaction Cu(2+)(in) + ATP + H2O = Cu(2+)(out) + ADP + phosphate + H(+). Functionally, mediates copper transfer across the chloroplast thylakoid membrane. Required for copper delivery into the thylakoids lumen, which is essential for the function of copper proteins. The chain is Copper-transporting ATPase PAA2, chloroplastic (PAA2) from Arabidopsis thaliana (Mouse-ear cress).